A 578-amino-acid polypeptide reads, in one-letter code: Proline--tRNA ligase (578 aa).

Belongs to the class-II aminoacyl-tRNA synthetase family. ProS type 1 subfamily. In terms of assembly, homodimer.

The protein resides in the cytoplasm. It catalyses the reaction tRNA(Pro) + L-proline + ATP = L-prolyl-tRNA(Pro) + AMP + diphosphate. In terms of biological role, catalyzes the attachment of proline to tRNA(Pro) in a two-step reaction: proline is first activated by ATP to form Pro-AMP and then transferred to the acceptor end of tRNA(Pro). As ProRS can inadvertently accommodate and process non-cognate amino acids such as alanine and cysteine, to avoid such errors it has two additional distinct editing activities against alanine. One activity is designated as 'pretransfer' editing and involves the tRNA(Pro)-independent hydrolysis of activated Ala-AMP. The other activity is designated 'posttransfer' editing and involves deacylation of mischarged Ala-tRNA(Pro). The misacylated Cys-tRNA(Pro) is not edited by ProRS. This chain is Proline--tRNA ligase, found in Burkholderia cenocepacia (strain HI2424).